The following is a 293-amino-acid chain: MALEMRLPKARKPLSESLGRDSKKHLVVPGDTITTDTGFMRGHGTYMGEEKLIASVAGSVERVNKLICVKALKTRYNGEVGDIVVGRITEVQQKRWKVETNSRLDSVLLLSSMNLPGGELRRRSAEDELAMRGFLQEGDLISAEVQAVFSDGAVSLHTRSLKYGKLGQGVLVQVSPSLVKRQKTHFHDLPCGASVILGNNGFIWIYPTPEHKDEDAGGFIANLEPVALSDREVISRLRNCVVLLVTQRMMLFDTSILYCYEASLAHQIKDILKPEVMEEIMLETRQRLLDQEG.

The interval Met-1–Arg-20 is disordered. The 81-residue stretch at Glu-79–Arg-159 folds into the S1 motif domain. A Phosphoserine modification is found at Ser-124.

This sequence belongs to the RRP4 family. Component of the RNA exosome core complex (Exo-9), composed of EXOSC1, EXOSC2, EXOSC3, EXOSC4, EXOSC5, EXOSC6, EXOSC7, EXOSC8 and EXOSC9; within the complex interacts with EXOSC4 and EXOSC7. The catalytically inactive RNA exosome core complex (Exo-9) associates with the catalytic subunit EXOSC10/RRP6. Exo-9 may associate with DIS3 to form the nucleolar exosome complex, or DIS3L to form the cytoplasmic exosome complex. Exo-9 is formed by a hexameric base ring consisting of the heterodimers EXOSC4-EXOSC9, EXOSC5-EXOSC8 and EXOSC6-EXOSC7, and a cap ring consisting of EXOSC1, EXOSC2 and EXOSC3. The RNA exosome complex associates with cofactors C1D/RRP47, MPHOSPH6/MPP6 and MTREX/MTR4. Interacts with GTPBP1. Interacts with ZFP36L1 (via N-terminus).

The protein resides in the cytoplasm. Its subcellular location is the nucleus. It is found in the nucleolus. Non-catalytic component of the RNA exosome complex which has 3'-&gt;5' exoribonuclease activity and participates in a multitude of cellular RNA processing and degradation events. In the nucleus, the RNA exosome complex is involved in proper maturation of stable RNA species such as rRNA, snRNA and snoRNA, in the elimination of RNA processing by-products and non-coding 'pervasive' transcripts, such as antisense RNA species and promoter-upstream transcripts (PROMPTs), and of mRNAs with processing defects, thereby limiting or excluding their export to the cytoplasm. The RNA exosome may be involved in Ig class switch recombination (CSR) and/or Ig variable region somatic hypermutation (SHM) by targeting AICDA deamination activity to transcribed dsDNA substrates. In the cytoplasm, the RNA exosome complex is involved in general mRNA turnover and specifically degrades inherently unstable mRNAs containing AU-rich elements (AREs) within their 3' untranslated regions, and in RNA surveillance pathways, preventing translation of aberrant mRNAs. It seems to be involved in degradation of histone mRNA. The catalytic inactive RNA exosome core complex of 9 subunits (Exo-9) is proposed to play a pivotal role in the binding and presentation of RNA for ribonucleolysis, and to serve as a scaffold for the association with catalytic subunits and accessory proteins or complexes. EXOSC2 as peripheral part of the Exo-9 complex stabilizes the hexameric ring of RNase PH-domain subunits through contacts with EXOSC4 and EXOSC7. This Mus musculus (Mouse) protein is Exosome complex component RRP4 (Exosc2).